A 384-amino-acid chain; its full sequence is DNA replication and repair protein RecF (384 aa).

30 to 37 (GENAQGKT) serves as a coordination point for ATP.

This sequence belongs to the RecF family.

It localises to the cytoplasm. In terms of biological role, the RecF protein is involved in DNA metabolism; it is required for DNA replication and normal SOS inducibility. RecF binds preferentially to single-stranded, linear DNA. It also seems to bind ATP. The protein is DNA replication and repair protein RecF of Levilactobacillus brevis (strain ATCC 367 / BCRC 12310 / CIP 105137 / JCM 1170 / LMG 11437 / NCIMB 947 / NCTC 947) (Lactobacillus brevis).